Here is a 257-residue protein sequence, read N- to C-terminus: Probable pectate lyase G (257 aa).

The signal sequence occupies residues 1-24 (MPVLSKLLPTLTLTLPLLAGPCLA).

This sequence belongs to the polysaccharide lyase 3 family. The cofactor is Ca(2+).

It localises to the secreted. The enzyme catalyses Eliminative cleavage of (1-&gt;4)-alpha-D-galacturonan to give oligosaccharides with 4-deoxy-alpha-D-galact-4-enuronosyl groups at their non-reducing ends.. Its function is as follows. Pectinolytic enzyme consist of four classes of enzymes: pectin lyase, polygalacturonase, pectin methylesterase and rhamnogalacturonase. Among pectinolytic enzymes, pectin lyase is the most important in depolymerization of pectin, since it cleaves internal glycosidic bonds of highly methylated pectins. Favors pectate, the anion, over pectin, the methyl ester. The sequence is that of Probable pectate lyase G (plyG) from Emericella nidulans (strain FGSC A4 / ATCC 38163 / CBS 112.46 / NRRL 194 / M139) (Aspergillus nidulans).